We begin with the raw amino-acid sequence, 290 residues long: Chitinase 10 (290 aa).

Positions methionine 1–glycine 28 are cleaved as a signal peptide. Disulfide bonds link cysteine 70–cysteine 132 and cysteine 144–cysteine 153. Residue glutamate 114 is the Proton donor of the active site. 2 N-linked (GlcNAc...) asparagine glycosylation sites follow: asparagine 193 and asparagine 234. Cysteine 252 and cysteine 284 are oxidised to a cystine.

Belongs to the glycosyl hydrolase 19 family. Chitinase class I subfamily. As to expression, expressed at low levels in roots, leaves and meristems.

The catalysed reaction is Random endo-hydrolysis of N-acetyl-beta-D-glucosaminide (1-&gt;4)-beta-linkages in chitin and chitodextrins.. In Oryza sativa subsp. japonica (Rice), this protein is Chitinase 10 (Cht10).